Here is a 122-residue protein sequence, read N- to C-terminus: Cofilin-5 (122 aa).

The ADF-H domain maps to 3–122; the sequence is SRIIEIDPNC…VKDLIQLSNL (120 aa).

The protein belongs to the actin-binding proteins ADF family.

The protein resides in the cytoplasm. The protein localises to the cytoskeleton. Controls actin polymerization and depolymerization. This Dictyostelium discoideum (Social amoeba) protein is Cofilin-5 (cofF).